Consider the following 110-residue polypeptide: UPF0060 membrane protein Nmul_A0351 (110 aa).

4 consecutive transmembrane segments (helical) span residues 7–27 (LFLF…PYLW), 33–53 (SAWL…LLTL), 63–83 (AAYG…VDGV), and 87–107 (AWDM…MFGP).

The protein belongs to the UPF0060 family.

It localises to the cell inner membrane. The protein is UPF0060 membrane protein Nmul_A0351 of Nitrosospira multiformis (strain ATCC 25196 / NCIMB 11849 / C 71).